Reading from the N-terminus, the 43-residue chain is Lanthionine-containing peptide SapB (43 aa).

A signal peptide spans 1-21 (MALLDLQAMDTPAEDSFGELR). 2 consecutive cross-links (lanthionine (Ser-Cys)) follow at residues 24–31 (SQVSLLVC) and 34–41 (SSLSVVLC). Ser27 and Ser37 each carry 2,3-didehydroalanine (Ser).

The protein belongs to the lanthionine-containing morphogen protein family. In terms of processing, maturation involves the enzymatic conversion of Ser into dehydrated AA and the formation of thioether bonds with cysteine. This is followed by membrane translocation and cleavage of the modified precursor.

Its function is as follows. Lanthionine-containing peptide devoid of antibiotic properties, involved in the formation of aerial mycelium. Suggested to self-assemble at air-water interfaces, thus providing a film of surfactant through which nascent aerial hyphae can emerge. The aerial hyphae differentiate further into spores. The protein is Lanthionine-containing peptide SapB (ramS) of Streptomyces griseus.